The chain runs to 144 residues: Small ribosomal subunit protein eS10A (144 aa).

A disordered region spans residues 90-144 (THKRQVRPTAPRAGRPEPRERASADAGYRRAEKKDEGAAPSGFAPSFRGGFGRPQ). Residues 103–126 (GRPEPRERASADAGYRRAEKKDEG) are compositionally biased toward basic and acidic residues.

It belongs to the eukaryotic ribosomal protein eS10 family. As to quaternary structure, component of the small ribosomal subunit (SSU). Mature yeast ribosomes consist of a small (40S) and a large (60S) subunit. The 40S small subunit contains 1 molecule of ribosomal RNA (18S rRNA) and at least 33 different proteins. The large 60S subunit contains 3 rRNA molecules (25S, 5.8S and 5S rRNA) and at least 46 different proteins. eS10 interacts with GCN1 (via middle region); this interaction is direct and promotes GCN2 kinase activity.

It is found in the cytoplasm. Functionally, component of the ribosome, a large ribonucleoprotein complex responsible for the synthesis of proteins in the cell. The small ribosomal subunit (SSU) binds messenger RNAs (mRNAs) and translates the encoded message by selecting cognate aminoacyl-transfer RNA (tRNA) molecules. The large subunit (LSU) contains the ribosomal catalytic site termed the peptidyl transferase center (PTC), which catalyzes the formation of peptide bonds, thereby polymerizing the amino acids delivered by tRNAs into a polypeptide chain. The nascent polypeptides leave the ribosome through a tunnel in the LSU and interact with protein factors that function in enzymatic processing, targeting, and the membrane insertion of nascent chains at the exit of the ribosomal tunnel. eS10 plays a role as a positive regulator of the GCN2 kinase activity by stimulating GCN1-mediated GCN2 activation. This is Small ribosomal subunit protein eS10A (rps1001) from Schizosaccharomyces pombe (strain 972 / ATCC 24843) (Fission yeast).